Consider the following 435-residue polypeptide: tRNA-2-methylthio-N(6)-dimethylallyladenosine synthase (435 aa).

The MTTase N-terminal domain occupies 5–120; sequence KKLFIETLGC…ISEVLHKERA (116 aa). Cysteine 14, cysteine 51, cysteine 83, cysteine 152, cysteine 156, and cysteine 159 together coordinate [4Fe-4S] cluster. Residues 138–372 form the Radical SAM core domain; it reads RTSPYKAYIN…NLAVNILDEK (235 aa). In terms of domain architecture, TRAM spans 374 to 435; sequence KTHLGKIYRV…RTILSGEIVG (62 aa).

Belongs to the methylthiotransferase family. MiaB subfamily. As to quaternary structure, monomer. It depends on [4Fe-4S] cluster as a cofactor.

The protein resides in the cytoplasm. The enzyme catalyses N(6)-dimethylallyladenosine(37) in tRNA + (sulfur carrier)-SH + AH2 + 2 S-adenosyl-L-methionine = 2-methylsulfanyl-N(6)-dimethylallyladenosine(37) in tRNA + (sulfur carrier)-H + 5'-deoxyadenosine + L-methionine + A + S-adenosyl-L-homocysteine + 2 H(+). Catalyzes the methylthiolation of N6-(dimethylallyl)adenosine (i(6)A), leading to the formation of 2-methylthio-N6-(dimethylallyl)adenosine (ms(2)i(6)A) at position 37 in tRNAs that read codons beginning with uridine. This chain is tRNA-2-methylthio-N(6)-dimethylallyladenosine synthase, found in Sulfurimonas denitrificans (strain ATCC 33889 / DSM 1251) (Thiomicrospira denitrificans (strain ATCC 33889 / DSM 1251)).